We begin with the raw amino-acid sequence, 163 residues long: Large ribosomal subunit protein uL15 (163 aa).

The span at 1 to 29 (MSKKRRQRGSRTHGGGSHKNRRGAGHRGG) shows a compositional bias: basic residues. Disordered regions lie at residues 1–59 (MSKK…KTRR) and 135–163 (VADG…DEES). 2 stretches are compositionally biased toward basic and acidic residues: residues 33–46 (AGRD…HEPL) and 142–154 (LSER…AEKD).

Belongs to the universal ribosomal protein uL15 family. Part of the 50S ribosomal subunit.

In terms of biological role, binds to the 23S rRNA. In Natronomonas pharaonis (strain ATCC 35678 / DSM 2160 / CIP 103997 / JCM 8858 / NBRC 14720 / NCIMB 2260 / Gabara) (Halobacterium pharaonis), this protein is Large ribosomal subunit protein uL15.